The chain runs to 454 residues: Pup--protein ligase (454 aa).

Glutamate 9 provides a ligand contact to Mg(2+). Residue arginine 53 coordinates ATP. Tyrosine 55 is a binding site for Mg(2+). The active-site Proton acceptor is aspartate 57. Glutamate 63 contacts Mg(2+). Threonine 66 and tryptophan 420 together coordinate ATP.

Belongs to the Pup ligase/Pup deamidase family. Pup-conjugating enzyme subfamily.

The enzyme catalyses ATP + [prokaryotic ubiquitin-like protein]-L-glutamate + [protein]-L-lysine = ADP + phosphate + N(6)-([prokaryotic ubiquitin-like protein]-gamma-L-glutamyl)-[protein]-L-lysine.. It functions in the pathway protein degradation; proteasomal Pup-dependent pathway. Its pathway is protein modification; protein pupylation. Its function is as follows. Catalyzes the covalent attachment of the prokaryotic ubiquitin-like protein modifier Pup to the proteasomal substrate proteins, thereby targeting them for proteasomal degradation. This tagging system is termed pupylation. The ligation reaction involves the side-chain carboxylate of the C-terminal glutamate of Pup and the side-chain amino group of a substrate lysine. In Arthrobacter sp. (strain FB24), this protein is Pup--protein ligase.